A 384-amino-acid polypeptide reads, in one-letter code: S-adenosylmethionine synthase (384 aa).

An ATP-binding site is contributed by histidine 15. Aspartate 17 serves as a coordination point for Mg(2+). Glutamate 43 is a K(+) binding site. L-methionine contacts are provided by glutamate 56 and glutamine 99. The flexible loop stretch occupies residues 99 to 109; it reads QSPDINQGVDR. Residues 164-166, 231-232, aspartate 240, 246-247, alanine 263, and lysine 267 contribute to the ATP site; these read DAK, RF, and RK. Aspartate 240 is a binding site for L-methionine. An L-methionine-binding site is contributed by lysine 271.

This sequence belongs to the AdoMet synthase family. Homotetramer; dimer of dimers. Mg(2+) serves as cofactor. K(+) is required as a cofactor.

It localises to the cytoplasm. It carries out the reaction L-methionine + ATP + H2O = S-adenosyl-L-methionine + phosphate + diphosphate. Its pathway is amino-acid biosynthesis; S-adenosyl-L-methionine biosynthesis; S-adenosyl-L-methionine from L-methionine: step 1/1. Catalyzes the formation of S-adenosylmethionine (AdoMet) from methionine and ATP. The overall synthetic reaction is composed of two sequential steps, AdoMet formation and the subsequent tripolyphosphate hydrolysis which occurs prior to release of AdoMet from the enzyme. This is S-adenosylmethionine synthase from Shewanella halifaxensis (strain HAW-EB4).